A 207-amino-acid polypeptide reads, in one-letter code: Dephospho-CoA kinase (207 aa).

One can recognise a DPCK domain in the interval 5-202 (VVGLTGGIGS…LQYLKLSAEK (198 aa)). 13 to 18 (GSGKST) serves as a coordination point for ATP.

This sequence belongs to the CoaE family.

The protein resides in the cytoplasm. The catalysed reaction is 3'-dephospho-CoA + ATP = ADP + CoA + H(+). The protein operates within cofactor biosynthesis; coenzyme A biosynthesis; CoA from (R)-pantothenate: step 5/5. In terms of biological role, catalyzes the phosphorylation of the 3'-hydroxyl group of dephosphocoenzyme A to form coenzyme A. The chain is Dephospho-CoA kinase from Dechloromonas aromatica (strain RCB).